The chain runs to 135 residues: S-adenosylmethionine decarboxylase proenzyme (135 aa).

The Schiff-base intermediate with substrate; via pyruvic acid role is filled by Ser-63. Position 63 is a pyruvic acid (Ser); by autocatalysis (Ser-63). His-68 serves as the catalytic Proton acceptor; for processing activity. The active-site Proton donor; for catalytic activity is the Cys-83.

This sequence belongs to the prokaryotic AdoMetDC family. Type 1 subfamily. In terms of assembly, heterotetramer of two alpha and two beta chains arranged as a dimer of alpha/beta heterodimers. It depends on pyruvate as a cofactor. In terms of processing, is synthesized initially as an inactive proenzyme. Formation of the active enzyme involves a self-maturation process in which the active site pyruvoyl group is generated from an internal serine residue via an autocatalytic post-translational modification. Two non-identical subunits are generated from the proenzyme in this reaction, and the pyruvate is formed at the N-terminus of the alpha chain, which is derived from the carboxyl end of the proenzyme. The post-translation cleavage follows an unusual pathway, termed non-hydrolytic serinolysis, in which the side chain hydroxyl group of the serine supplies its oxygen atom to form the C-terminus of the beta chain, while the remainder of the serine residue undergoes an oxidative deamination to produce ammonia and the pyruvoyl group blocking the N-terminus of the alpha chain.

The catalysed reaction is S-adenosyl-L-methionine + H(+) = S-adenosyl 3-(methylsulfanyl)propylamine + CO2. It participates in amine and polyamine biosynthesis; S-adenosylmethioninamine biosynthesis; S-adenosylmethioninamine from S-adenosyl-L-methionine: step 1/1. Its function is as follows. Catalyzes the decarboxylation of S-adenosylmethionine to S-adenosylmethioninamine (dcAdoMet), the propylamine donor required for the synthesis of the polyamines spermine and spermidine from the diamine putrescine. This Thermodesulfovibrio yellowstonii (strain ATCC 51303 / DSM 11347 / YP87) protein is S-adenosylmethionine decarboxylase proenzyme.